The sequence spans 211 residues: Large ribosomal subunit protein uL3 (211 aa).

Residues 126–147 form a disordered region; it reads HGQSRGPMAHGSRYHRRPGSMG.

It belongs to the universal ribosomal protein uL3 family. As to quaternary structure, part of the 50S ribosomal subunit. Forms a cluster with proteins L14 and L19.

Its function is as follows. One of the primary rRNA binding proteins, it binds directly near the 3'-end of the 23S rRNA, where it nucleates assembly of the 50S subunit. This is Large ribosomal subunit protein uL3 from Geobacillus thermodenitrificans (strain NG80-2).